Consider the following 228-residue polypeptide: Max-interacting protein 1 (228 aa).

Disordered stretches follow at residues 29–76 (GYAS…NELE) and 162–228 (GSTI…SFTS). The segment covering 43-56 (QHSKPPRRLSRAQK) has biased composition (basic residues). Residues 57 to 70 (HSSGSSNTSTANRS) show a composition bias toward polar residues. Residues 67–119 (ANRSTHNELEKNRRAHLRLCLERLKVLIPLGPDCTRHTTLGLLNKAKAHIKKL) form the bHLH domain. Acidic residues predominate over residues 173 to 183 (EREEIEVDVES). Over residues 216–228 (GYSSASVKLSFTS) the composition is skewed to polar residues.

Efficient DNA binding requires dimerization with another bHLH protein. Binds DNA as a heterodimer with MAX. Interacts with SMC3. Interacts with RNF17.

It localises to the nucleus. Transcriptional repressor. MXI1 binds with MAX to form a sequence-specific DNA-binding protein complex which recognizes the core sequence 5'-CAC[GA]TG-3'. MXI1 thus antagonizes MYC transcriptional activity by competing for MAX. The sequence is that of Max-interacting protein 1 (Mxi1) from Rattus norvegicus (Rat).